The chain runs to 353 residues: Protein-glutamate methylesterase/protein-glutamine glutaminase 4 (353 aa).

Residues 7–124 (RILVAEDSPT…SPDFDADSRR (118 aa)) enclose the Response regulatory domain. 4-aspartylphosphate is present on aspartate 58. Residues 158 to 350 (PVSPTRPGVV…SRLTSAFRGS (193 aa)) form the CheB-type methylesterase domain. Residues serine 172, histidine 199, and aspartate 292 contribute to the active site.

This sequence belongs to the CheB family. Post-translationally, phosphorylated by CheA. Phosphorylation of the N-terminal regulatory domain activates the methylesterase activity.

It localises to the cytoplasm. The enzyme catalyses [protein]-L-glutamate 5-O-methyl ester + H2O = L-glutamyl-[protein] + methanol + H(+). The catalysed reaction is L-glutaminyl-[protein] + H2O = L-glutamyl-[protein] + NH4(+). Functionally, involved in chemotaxis. Part of a chemotaxis signal transduction system that modulates chemotaxis in response to various stimuli. Catalyzes the demethylation of specific methylglutamate residues introduced into the chemoreceptors (methyl-accepting chemotaxis proteins or MCP) by CheR. Also mediates the irreversible deamidation of specific glutamine residues to glutamic acid. This is Protein-glutamate methylesterase/protein-glutamine glutaminase 4 from Myxococcus xanthus (strain DK1622).